Here is a 160-residue protein sequence, read N- to C-terminus: Transcription elongation factor GreA (160 aa).

The protein belongs to the GreA/GreB family.

Functionally, necessary for efficient RNA polymerase transcription elongation past template-encoded arresting sites. The arresting sites in DNA have the property of trapping a certain fraction of elongating RNA polymerases that pass through, resulting in locked ternary complexes. Cleavage of the nascent transcript by cleavage factors such as GreA or GreB allows the resumption of elongation from the new 3'terminus. GreA releases sequences of 2 to 3 nucleotides. The sequence is that of Transcription elongation factor GreA from Francisella philomiragia subsp. philomiragia (strain ATCC 25017 / CCUG 19701 / FSC 153 / O#319-036).